The following is a 156-amino-acid chain: Small ribosomal subunit protein uS10m (156 aa).

The protein belongs to the universal ribosomal protein uS10 family.

It localises to the mitochondrion. In terms of biological role, ribosomal protein required for normal mitochondrial function and normal larval development. Thought to have a role in insulin/IGF signaling. The sequence is that of Small ribosomal subunit protein uS10m (mrps-10) from Caenorhabditis elegans.